Here is a 719-residue protein sequence, read N- to C-terminus: MKLLKKSSSLKKGVTKRAKLQKKPPSKDEASSSDEELAKLDGEGSLDGNESEEDDGTVQVEKGGMKKHKLDLEALKKSDPEFFKFLQQEDADLLNMEEDEDDDEEGEDNEDEEDEEEEEESDEDDDEEDDDKTKIKKIRKPKVKSDSSGRLIVDSNVYSYLQQVLVLDDETTTPINPSDVRMAIDVFVACVARVGADIEAPKYVINEQSIFEAVVRMCFQAMPDVLKRLLKARPDGEKVLFSKTMIKKYQTYVRTYLHAMIVFLNEVQTTEVIIATLKAITRLVDLYAHFSRMSKLLIKAIVKIWSRKTLECRLPAFVCMNLLVKNYPQHFVPLYKTAYVAFVANSKVVTNETWPLLQFMHRTFAEITMINPEQAYKYAFVYIRQTAVHLRNAMIAKGRKDLIFSIYNWQMMQCMYMWVRVIAKAHSVNGAEQIGELVYPLIQVIVGIFKLCNAPTFLPLRLHCCQMLIQLQASCTNYIPIMQLSCDCLEELARELKSKPKPAKGAVKLPDIECTLKCSTQYSDLPQWRKTISEHVFRTMMQSAHLLASQAAFPDVALPINHRIATILDTMKNADQAHLFRGFQTKLKEHSRFVLDVLARKHVDLNDEMQVRAVRFDLNNPDSPIKSFYRQWEKVWKMKEKSALENSKKDDKKKKKEEEAAKKRKATETLEDDDDEDAKPTIPKAKRKRIKIGAAAKRADATVPDQFADMSLANWSDED.

The segment covering 1 to 24 has biased composition (basic residues); that stretch reads MKLLKKSSSLKKGVTKRAKLQKKP. Disordered stretches follow at residues 1-67, 86-136, and 643-719; these read MKLL…GMKK, LQQE…TKIK, and ALEN…SDED. The segment covering 25–42 has biased composition (basic and acidic residues); the sequence is PSKDEASSSDEELAKLDG. Positions 89–130 are enriched in acidic residues; it reads EDADLLNMEEDEDDDEEGEDNEDEEDEEEEEESDEDDDEEDD. Positions 643-661 are enriched in basic and acidic residues; it reads ALENSKKDDKKKKKEEEAA.

This sequence belongs to the NOC2 family.

Its subcellular location is the nucleus. Its function is as follows. Required for normal somatic gonad development and for regulation of germline development and proliferation. This is Nucleolar complex protein 2 homolog (pro-2) from Caenorhabditis briggsae.